A 349-amino-acid polypeptide reads, in one-letter code: Protein RecA (349 aa).

65 to 72 (GPESSGKT) serves as a coordination point for ATP.

The protein belongs to the RecA family.

It localises to the cytoplasm. Functionally, can catalyze the hydrolysis of ATP in the presence of single-stranded DNA, the ATP-dependent uptake of single-stranded DNA by duplex DNA, and the ATP-dependent hybridization of homologous single-stranded DNAs. It interacts with LexA causing its activation and leading to its autocatalytic cleavage. The polypeptide is Protein RecA (Aliarcobacter butzleri (strain RM4018) (Arcobacter butzleri)).